A 217-amino-acid chain; its full sequence is Adenylate kinase (217 aa).

10 to 15 (GAGKGT) contacts ATP. The NMP stretch occupies residues 30–59 (STGDMFRAAMKEETPLGLEAKSYIDKGELV). AMP-binding positions include Thr-31, Arg-36, 57 to 59 (ELV), 85 to 88 (GFPR), and Gln-92. The interval 126–163 (GRRICSVCGTTYHLVFNPPKTPGICDKDGGELYQRADD) is LID. An ATP-binding site is contributed by Arg-127. The Zn(2+) site is built by Cys-130 and Cys-133. 136-137 (TY) provides a ligand contact to ATP. Residues Cys-150 and Asp-153 each contribute to the Zn(2+) site. AMP-binding residues include Arg-160 and Arg-171. Gln-199 serves as a coordination point for ATP.

Belongs to the adenylate kinase family. As to quaternary structure, monomer.

The protein resides in the cytoplasm. It carries out the reaction AMP + ATP = 2 ADP. It participates in purine metabolism; AMP biosynthesis via salvage pathway; AMP from ADP: step 1/1. Functionally, catalyzes the reversible transfer of the terminal phosphate group between ATP and AMP. Plays an important role in cellular energy homeostasis and in adenine nucleotide metabolism. This is Adenylate kinase from Bacillus subtilis (strain 168).